A 107-amino-acid chain; its full sequence is Glutaconyl-CoA decarboxylase subunit delta (107 aa).

A helical transmembrane segment spans residues 10–32 (MINMTIVFGVLIVLGILMVLIHA). The tract at residues 37 to 60 (KKVQGKKKPVVAKPAPSAAASKRQ) is disordered. The segment covering 47–57 (VAKPAPSAAAS) has biased composition (low complexity).

It belongs to the OadG family. In terms of assembly, heterooctamer consisting of two alpha, two beta, two gamma and two delta subunits.

The protein resides in the cell membrane. The catalysed reaction is (2E)-glutaconyl-CoA + Na(+)(in) + H(+) = (2E)-butenoyl-CoA + Na(+)(out) + CO2. It participates in amino-acid degradation; L-glutamate degradation via hydroxyglutarate pathway; crotonoyl-CoA from L-glutamate: step 5/5. Part of the primary sodium pump glutaconyl-CoA decarboxylase (GCD). Possible membrane anchor for the alpha subunit. The protein is Glutaconyl-CoA decarboxylase subunit delta (gcdD) of Acidaminococcus fermentans (strain ATCC 25085 / DSM 20731 / CCUG 9996 / CIP 106432 / VR4).